An 88-amino-acid chain; its full sequence is EMBRYO SURROUNDING FACTOR 1-like protein 3 (88 aa).

Positions 1–22 (MKLSQIALICIVIASLFAMHEC) are cleaved as a signal peptide. Cystine bridges form between C41–C56, C54–C80, and C57–C67.

The protein belongs to the MEG family. As to expression, expressed in stems, leaves and flowers.

The polypeptide is EMBRYO SURROUNDING FACTOR 1-like protein 3 (ESFL3) (Arabidopsis thaliana (Mouse-ear cress)).